A 370-amino-acid chain; its full sequence is Lysophosphatidic acid receptor 4 (370 aa).

At 1-43 (MGDRRFIDFQFQDLNSSLRPRLGNATANNTCIVDDSFKYNLNG) the chain is on the extracellular side. 3 N-linked (GlcNAc...) asparagine glycosylation sites follow: Asn15, Asn24, and Asn28. The helical transmembrane segment at 44–64 (AVYSVVFILGLITNSASLFVF) threads the bilayer. Residues 65-73 (CFRMKMRSE) lie on the Cytoplasmic side of the membrane. Residues 74–94 (TAIFITNLALSDLLFVCTLPF) traverse the membrane as a helical segment. The Extracellular segment spans residues 95–112 (KIFYNFNRHWPFGDTLCK). Cys111 and Cys188 are oxidised to a cystine. A helical transmembrane segment spans residues 113–133 (ISGTAFLTNIYGSMLFLTCIS). The Cytoplasmic portion of the chain corresponds to 134–155 (VDRFLAIVYPFRSRTIRTRRNS). A helical transmembrane segment spans residues 156 to 176 (AIVCAGVWILVLSGGISASLF). Residues 177-203 (STTNVNNATTTCFEGFSKRVWKTYLSK) lie on the Extracellular side of the membrane. N-linked (GlcNAc...) asparagine glycosylation occurs at Asn183. A helical transmembrane segment spans residues 204–224 (ITIFIEVVGFIIPLILNVSCS). At 225–254 (SVVLRTLRKPATLSQIGTNKKKVLKMITVH) the chain is on the cytoplasmic side. The chain crosses the membrane as a helical span at residues 255-275 (MAVFVVCFVPYNSVLFLYALV). Residues 276–294 (RSQAITNCLLERFAKIMYP) lie on the Extracellular side of the membrane. Residues 295–315 (ITLCLATLNCCFDPFIYYFTL) traverse the membrane as a helical segment. The Cytoplasmic segment spans residues 316–370 (ESFQKSFYINTHIRMESLFKTETPLTPKPSLPAIQEEVSDQTTNNGGELMLESTF).

Belongs to the G-protein coupled receptor 1 family.

It localises to the cell membrane. Receptor for lysophosphatidic acid (LPA), a mediator of diverse cellular activities. Transduces a signal by increasing the intracellular calcium ions and by stimulating adenylyl cyclase activity. The rank order of potency for agonists of this receptor is 1-oleoyl- &gt; 1-stearoyl- &gt; 1-palmitoyl- &gt; 1-myristoyl- &gt; 1-alkyl- &gt; 1-alkenyl-LPA. The sequence is that of Lysophosphatidic acid receptor 4 (Lpar4) from Mus musculus (Mouse).